The sequence spans 232 residues: Orotate phosphoribosyltransferase (232 aa).

5-phospho-alpha-D-ribose 1-diphosphate contacts are provided by residues R107, K108, K111, H113, and E133–S141. Residue T137 participates in orotate binding.

The protein belongs to the purine/pyrimidine phosphoribosyltransferase family. PyrE subfamily. In terms of assembly, homodimer. Mg(2+) serves as cofactor.

The enzyme catalyses orotidine 5'-phosphate + diphosphate = orotate + 5-phospho-alpha-D-ribose 1-diphosphate. The protein operates within pyrimidine metabolism; UMP biosynthesis via de novo pathway; UMP from orotate: step 1/2. Catalyzes the transfer of a ribosyl phosphate group from 5-phosphoribose 1-diphosphate to orotate, leading to the formation of orotidine monophosphate (OMP). This Rhizobium rhizogenes (strain K84 / ATCC BAA-868) (Agrobacterium radiobacter) protein is Orotate phosphoribosyltransferase.